Here is a 161-residue protein sequence, read N- to C-terminus: DNA endonuclease I-CvuI (161 aa).

Belongs to the LAGLIDADG endonuclease family.

The protein localises to the plastid. The protein resides in the chloroplast. Its function is as follows. Probable endonuclease involved in intron homing. The chain is DNA endonuclease I-CvuI from Chlorella vulgaris (Green alga).